A 245-amino-acid chain; its full sequence is Demethylmenaquinone methyltransferase (245 aa).

S-adenosyl-L-methionine-binding positions include threonine 69, aspartate 90, and 118-119 (DC).

It belongs to the class I-like SAM-binding methyltransferase superfamily. MenG/UbiE family.

It carries out the reaction a 2-demethylmenaquinol + S-adenosyl-L-methionine = a menaquinol + S-adenosyl-L-homocysteine + H(+). Its pathway is quinol/quinone metabolism; menaquinone biosynthesis; menaquinol from 1,4-dihydroxy-2-naphthoate: step 2/2. Its function is as follows. Methyltransferase required for the conversion of demethylmenaquinol (DMKH2) to menaquinol (MKH2). In Porphyromonas gingivalis (strain ATCC 33277 / DSM 20709 / CIP 103683 / JCM 12257 / NCTC 11834 / 2561), this protein is Demethylmenaquinone methyltransferase.